The sequence spans 147 residues: Nucleoside diphosphate kinase (147 aa).

ATP is bound by residues Lys-11, Phe-59, Arg-87, Thr-93, Arg-104, and Asn-114. His-117 serves as the catalytic Pros-phosphohistidine intermediate.

This sequence belongs to the NDK family. Homotetramer. Mg(2+) serves as cofactor.

The protein localises to the cytoplasm. The catalysed reaction is a 2'-deoxyribonucleoside 5'-diphosphate + ATP = a 2'-deoxyribonucleoside 5'-triphosphate + ADP. The enzyme catalyses a ribonucleoside 5'-diphosphate + ATP = a ribonucleoside 5'-triphosphate + ADP. Functionally, major role in the synthesis of nucleoside triphosphates other than ATP. The ATP gamma phosphate is transferred to the NDP beta phosphate via a ping-pong mechanism, using a phosphorylated active-site intermediate. The protein is Nucleoside diphosphate kinase of Anaeromyxobacter dehalogenans (strain 2CP-1 / ATCC BAA-258).